Reading from the N-terminus, the 302-residue chain is UDP-3-O-acyl-N-acetylglucosamine deacetylase (302 aa).

Residues His82, His238, and Asp242 each contribute to the Zn(2+) site. The active-site Proton donor is His265.

Belongs to the LpxC family. It depends on Zn(2+) as a cofactor.

It carries out the reaction a UDP-3-O-[(3R)-3-hydroxyacyl]-N-acetyl-alpha-D-glucosamine + H2O = a UDP-3-O-[(3R)-3-hydroxyacyl]-alpha-D-glucosamine + acetate. Its pathway is glycolipid biosynthesis; lipid IV(A) biosynthesis; lipid IV(A) from (3R)-3-hydroxytetradecanoyl-[acyl-carrier-protein] and UDP-N-acetyl-alpha-D-glucosamine: step 2/6. Functionally, catalyzes the hydrolysis of UDP-3-O-myristoyl-N-acetylglucosamine to form UDP-3-O-myristoylglucosamine and acetate, the committed step in lipid A biosynthesis. In Leptospira biflexa serovar Patoc (strain Patoc 1 / Ames), this protein is UDP-3-O-acyl-N-acetylglucosamine deacetylase.